The sequence spans 120 residues: Ribonuclease P protein component (120 aa).

It belongs to the RnpA family. As to quaternary structure, consists of a catalytic RNA component (M1 or rnpB) and a protein subunit.

The catalysed reaction is Endonucleolytic cleavage of RNA, removing 5'-extranucleotides from tRNA precursor.. Its function is as follows. RNaseP catalyzes the removal of the 5'-leader sequence from pre-tRNA to produce the mature 5'-terminus. It can also cleave other RNA substrates such as 4.5S RNA. The protein component plays an auxiliary but essential role in vivo by binding to the 5'-leader sequence and broadening the substrate specificity of the ribozyme. This chain is Ribonuclease P protein component, found in Mycobacterium leprae (strain Br4923).